Here is a 232-residue protein sequence, read N- to C-terminus: uncharacterized protein (232 aa).

Disordered stretches follow at residues 123–147 and 169–200; these read VAGG…RKYP and AAAD…PSLR.

Belongs to the mycobacterial PPE family.

This is an uncharacterized protein from Mycobacterium tuberculosis (strain ATCC 25618 / H37Rv).